The primary structure comprises 271 residues: MGNHQADKKFTWVIKNYNSLGSGSVYSDTFKAGRCKWRLLAFPKGNNIYDYFFLYICVPNSESLPSGWRRRAKVSFTMVNQIPGGLSQQREAVYWFDEKDTTHGFESMFLLSEIQSSDKGFLVNGEVKIVAEVDVLEVIGELDVPEEPERIDINGFQVPASQVESMNSLFEKYRGFASKIFPKNQHLRKTFLDVVLSMTEILCKFPEELSSGDLAEAYSALRFVTKAGFKLDWLEKKLKETGKSRLQEIEEDLKDLKVKCADMDALLDFLR.

The 127-residue stretch at 7–133 folds into the MATH domain; sequence DKKFTWVIKN…NGEVKIVAEV (127 aa). Residues 230–271 are a coiled coil; sequence KLDWLEKKLKETGKSRLQEIEEDLKDLKVKCADMDALLDFLR.

In Arabidopsis thaliana (Mouse-ear cress), this protein is MATH domain and coiled-coil domain-containing protein At3g27040.